The chain runs to 337 residues: Probable RuBisCO transcriptional regulator (337 aa).

The 58-residue stretch at 6–63 (FTLDQLRILKAIAVEGSFKRAADSLYVSQPAVSLQVQNLERQLDVPLFDRGGRRAQLT) folds into the HTH lysR-type domain. A DNA-binding region (H-T-H motif) is located at residues 23-42 (FKRAADSLYVSQPAVSLQVQ).

It belongs to the LysR transcriptional regulatory family.

In terms of biological role, trans-acting transcriptional regulator of RuBisCO genes (rbcL and rbcS) expression. This is Probable RuBisCO transcriptional regulator (rbcR) from Nostoc sp. (strain PCC 7120 / SAG 25.82 / UTEX 2576).